A 204-amino-acid chain; its full sequence is E3 ubiquitin-protein ligase MPSR1 (204 aa).

The RING-type; atypical zinc-finger motif lies at cysteine 113–arginine 154.

In terms of processing, autoubiquitinated.

The protein resides in the cytoplasm. The enzyme catalyses S-ubiquitinyl-[E2 ubiquitin-conjugating enzyme]-L-cysteine + [acceptor protein]-L-lysine = [E2 ubiquitin-conjugating enzyme]-L-cysteine + N(6)-ubiquitinyl-[acceptor protein]-L-lysine.. Functionally, E3 ubiquitin-protein ligase involved in protein quality control (PQC) under proteotoxic stress. Is essential to plant survival under proteotoxic stress. Functions by removing damaged proteins before they form cytotoxic aggregates. Recognizes misfolded proteins selectively and tethers polyubiquitin chains to the proteins directly for subsequent degradation by the 26S proteasome pathway. Targets misfolded proteins independently of cytoplasmic chaperones. Associates with the 26S proteasome and sustains the structural integrity of the proteasome complex at the initial stage of proteotoxic stress. Under normal conditions, MPSR1 becomes highly unstable by its autoubiquitination activity and is stabilized during proteotoxic stress by conjugating ubiquitins on misfolded proteins. The sequence is that of E3 ubiquitin-protein ligase MPSR1 from Arabidopsis thaliana (Mouse-ear cress).